The chain runs to 295 residues: Small ribosomal subunit protein bS1 (295 aa).

S1 motif domains lie at 28–97 (GQLV…VSLR), 115–179 (GQTV…LSER), and 193–261 (GQLI…LSTK).

The protein belongs to the bacterial ribosomal protein bS1 family.

Functionally, binds mRNA. In Synechococcus elongatus (strain ATCC 33912 / PCC 7942 / FACHB-805) (Anacystis nidulans R2), this protein is Small ribosomal subunit protein bS1 (rpsA).